A 456-amino-acid polypeptide reads, in one-letter code: Bifunctional protein GlmU (456 aa).

The segment at 1–229 (MTKKALSAVI…VMEVEGANNR (229 aa)) is pyrophosphorylase. Residues 11 to 14 (LAAG), Lys-25, Gln-76, 81 to 82 (GT), 103 to 105 (YGD), Gly-140, Glu-154, Asn-169, and Asn-227 each bind UDP-N-acetyl-alpha-D-glucosamine. Asp-105 lines the Mg(2+) pocket. Asn-227 contributes to the Mg(2+) binding site. The linker stretch occupies residues 230 to 250 (LQLAALERYLQNKQASKLLLE). Residues 251–456 (GVMIYDPARF…QGWQRPIKKK (206 aa)) form an N-acetyltransferase region. Residues Arg-333 and Lys-351 each coordinate UDP-N-acetyl-alpha-D-glucosamine. Catalysis depends on His-363, which acts as the Proton acceptor. UDP-N-acetyl-alpha-D-glucosamine is bound by residues Tyr-366 and Asn-377. Acetyl-CoA contacts are provided by residues Ala-380, 386 to 387 (NY), Ser-405, Ala-423, and Arg-440.

This sequence in the N-terminal section; belongs to the N-acetylglucosamine-1-phosphate uridyltransferase family. In the C-terminal section; belongs to the transferase hexapeptide repeat family. As to quaternary structure, homotrimer. Mg(2+) serves as cofactor.

It localises to the cytoplasm. It carries out the reaction alpha-D-glucosamine 1-phosphate + acetyl-CoA = N-acetyl-alpha-D-glucosamine 1-phosphate + CoA + H(+). The enzyme catalyses N-acetyl-alpha-D-glucosamine 1-phosphate + UTP + H(+) = UDP-N-acetyl-alpha-D-glucosamine + diphosphate. Its pathway is nucleotide-sugar biosynthesis; UDP-N-acetyl-alpha-D-glucosamine biosynthesis; N-acetyl-alpha-D-glucosamine 1-phosphate from alpha-D-glucosamine 6-phosphate (route II): step 2/2. It functions in the pathway nucleotide-sugar biosynthesis; UDP-N-acetyl-alpha-D-glucosamine biosynthesis; UDP-N-acetyl-alpha-D-glucosamine from N-acetyl-alpha-D-glucosamine 1-phosphate: step 1/1. The protein operates within bacterial outer membrane biogenesis; LPS lipid A biosynthesis. In terms of biological role, catalyzes the last two sequential reactions in the de novo biosynthetic pathway for UDP-N-acetylglucosamine (UDP-GlcNAc). The C-terminal domain catalyzes the transfer of acetyl group from acetyl coenzyme A to glucosamine-1-phosphate (GlcN-1-P) to produce N-acetylglucosamine-1-phosphate (GlcNAc-1-P), which is converted into UDP-GlcNAc by the transfer of uridine 5-monophosphate (from uridine 5-triphosphate), a reaction catalyzed by the N-terminal domain. This chain is Bifunctional protein GlmU, found in Haemophilus influenzae (strain PittGG).